The sequence spans 305 residues: Mitogen-activated protein kinase kinase 10 (305 aa).

Serine 34 carries the phosphoserine modification. Residues 48–302 enclose the Protein kinase domain; sequence LEKLSVLGQG…VEELLRHSFV (255 aa). ATP is bound by residues 54–62 and lysine 77; that span reads LGQGSGGTV. Aspartate 165 (proton acceptor) is an active-site residue. Threonine 200 bears the Phosphothreonine mark.

The protein belongs to the protein kinase superfamily. STE Ser/Thr protein kinase family. MAP kinase kinase subfamily. Interacts with P.syringae type III effector HopF2.

The catalysed reaction is L-seryl-[protein] + ATP = O-phospho-L-seryl-[protein] + ADP + H(+). The enzyme catalyses L-threonyl-[protein] + ATP = O-phospho-L-threonyl-[protein] + ADP + H(+). It catalyses the reaction L-tyrosyl-[protein] + ATP = O-phospho-L-tyrosyl-[protein] + ADP + H(+). The polypeptide is Mitogen-activated protein kinase kinase 10 (MKK10) (Arabidopsis thaliana (Mouse-ear cress)).